The chain runs to 261 residues: Transcription repressor OFP15 (261 aa).

Residues Met-1–Ser-28 are disordered. The segment covering Ser-11–Ser-28 has biased composition (low complexity). An OVATE domain is found at Phe-112 to Asn-172.

As to quaternary structure, interacts with BLH1 and BLH3. In terms of tissue distribution, expressed in roots, cauline leaves, shoots, flower buds and siliques.

The protein localises to the nucleus. Functionally, transcriptional repressor that regulates multiple aspects of plant growth and development through the regulation of BEL1-LIKE (BLH) and KNOX TALE (KNAT) homeodomain transcription factors. In Arabidopsis thaliana (Mouse-ear cress), this protein is Transcription repressor OFP15 (OFP15).